A 149-amino-acid chain; its full sequence is Calmodulin (149 aa).

An N-acetylalanine modification is found at A2. EF-hand domains lie at 8-43 (EQIAEFKEAFSLFDKDGDGTITTKELGTVMRSLGQN), 44-79 (PTEAELQDMINEVDTDGNGTIDFPEFLTMMARKMKE), 81-116 (DSEEEIREAFRVFDKDGNGFISAAELRHVMTNLGEK), and 117-149 (LTDEEVDEMIREADTDGDGQVNYEEFVGMMTSK). Ca(2+)-binding residues include D21, D23, D25, T27, E32, D57, D59, N61, T63, E68, D94, D96, N98, and E105. K116 is subject to N6,N6,N6-trimethyllysine. Ca(2+) contacts are provided by D130, D132, D134, Q136, and E141.

It belongs to the calmodulin family.

Calmodulin mediates the control of a large number of enzymes, ion channels and other proteins by Ca(2+). Among the enzymes to be stimulated by the calmodulin-Ca(2+) complex are a number of protein kinases and phosphatases. This is Calmodulin from Suberites domuncula (Sponge).